The following is a 216-amino-acid chain: Pyridoxine/pyridoxamine 5'-phosphate oxidase (216 aa).

Substrate is bound by residues 9–12 and Arg-67; that span reads RLSY. Residues 62-67, 77-78, Lys-84, and Gln-106 contribute to the FMN site; these read RIVLLR and YT. Residues Tyr-124, Arg-128, and Ser-132 each contribute to the substrate site. FMN is bound by residues 142–143 and Trp-188; that span reads QS. 194-196 is a substrate binding site; it reads RMH. Arg-198 serves as a coordination point for FMN.

This sequence belongs to the pyridoxamine 5'-phosphate oxidase family. As to quaternary structure, homodimer. The cofactor is FMN.

The catalysed reaction is pyridoxamine 5'-phosphate + O2 + H2O = pyridoxal 5'-phosphate + H2O2 + NH4(+). The enzyme catalyses pyridoxine 5'-phosphate + O2 = pyridoxal 5'-phosphate + H2O2. It functions in the pathway cofactor metabolism; pyridoxal 5'-phosphate salvage; pyridoxal 5'-phosphate from pyridoxamine 5'-phosphate: step 1/1. The protein operates within cofactor metabolism; pyridoxal 5'-phosphate salvage; pyridoxal 5'-phosphate from pyridoxine 5'-phosphate: step 1/1. Catalyzes the oxidation of either pyridoxine 5'-phosphate (PNP) or pyridoxamine 5'-phosphate (PMP) into pyridoxal 5'-phosphate (PLP). This chain is Pyridoxine/pyridoxamine 5'-phosphate oxidase, found in Psychrobacter cryohalolentis (strain ATCC BAA-1226 / DSM 17306 / VKM B-2378 / K5).